A 417-amino-acid polypeptide reads, in one-letter code: D-amino acid dehydrogenase (417 aa).

3-17 (IVVLGGGVVGVTSAW) provides a ligand contact to FAD.

The protein belongs to the DadA oxidoreductase family. FAD serves as cofactor.

It catalyses the reaction a D-alpha-amino acid + A + H2O = a 2-oxocarboxylate + AH2 + NH4(+). The protein operates within amino-acid degradation; D-alanine degradation; NH(3) and pyruvate from D-alanine: step 1/1. Its function is as follows. Oxidative deamination of D-amino acids. This is D-amino acid dehydrogenase from Aeromonas salmonicida (strain A449).